Here is a 267-residue protein sequence, read N- to C-terminus: uncharacterized protein (267 aa).

Positions Leu2–Gly198 constitute an ABC transporter domain. Gly3 to Thr10 serves as a coordination point for ATP.

It belongs to the ABC transporter superfamily.

This is an uncharacterized protein from Alkalihalophilus pseudofirmus (strain ATCC BAA-2126 / JCM 17055 / OF4) (Bacillus pseudofirmus).